The sequence spans 431 residues: Serine--tRNA ligase (431 aa).

An L-serine-binding site is contributed by 238–240 (TAE). Residue 269–271 (RSE) coordinates ATP. Residue Glu-292 coordinates L-serine. Residue 356–359 (EISS) participates in ATP binding. L-serine is bound at residue Ser-392.

Belongs to the class-II aminoacyl-tRNA synthetase family. Type-1 seryl-tRNA synthetase subfamily. Homodimer. The tRNA molecule binds across the dimer.

It is found in the cytoplasm. The catalysed reaction is tRNA(Ser) + L-serine + ATP = L-seryl-tRNA(Ser) + AMP + diphosphate + H(+). The enzyme catalyses tRNA(Sec) + L-serine + ATP = L-seryl-tRNA(Sec) + AMP + diphosphate + H(+). It participates in aminoacyl-tRNA biosynthesis; selenocysteinyl-tRNA(Sec) biosynthesis; L-seryl-tRNA(Sec) from L-serine and tRNA(Sec): step 1/1. Its function is as follows. Catalyzes the attachment of serine to tRNA(Ser). Is also able to aminoacylate tRNA(Sec) with serine, to form the misacylated tRNA L-seryl-tRNA(Sec), which will be further converted into selenocysteinyl-tRNA(Sec). This chain is Serine--tRNA ligase, found in Pectobacterium atrosepticum (strain SCRI 1043 / ATCC BAA-672) (Erwinia carotovora subsp. atroseptica).